We begin with the raw amino-acid sequence, 417 residues long: Serine hydroxymethyltransferase 1 (417 aa).

(6S)-5,6,7,8-tetrahydrofolate-binding positions include Leu-121 and 125–127; that span reads GHL. Lys-230 bears the N6-(pyridoxal phosphate)lysine mark. 355 to 357 is a (6S)-5,6,7,8-tetrahydrofolate binding site; the sequence is SPF.

This sequence belongs to the SHMT family. Homodimer. The cofactor is pyridoxal 5'-phosphate.

It localises to the cytoplasm. It carries out the reaction (6R)-5,10-methylene-5,6,7,8-tetrahydrofolate + glycine + H2O = (6S)-5,6,7,8-tetrahydrofolate + L-serine. Its pathway is one-carbon metabolism; tetrahydrofolate interconversion. It participates in amino-acid biosynthesis; glycine biosynthesis; glycine from L-serine: step 1/1. Functionally, catalyzes the reversible interconversion of serine and glycine with tetrahydrofolate (THF) serving as the one-carbon carrier. This reaction serves as the major source of one-carbon groups required for the biosynthesis of purines, thymidylate, methionine, and other important biomolecules. Also exhibits THF-independent aldolase activity toward beta-hydroxyamino acids, producing glycine and aldehydes, via a retro-aldol mechanism. The protein is Serine hydroxymethyltransferase 1 of Pseudomonas aeruginosa (strain ATCC 15692 / DSM 22644 / CIP 104116 / JCM 14847 / LMG 12228 / 1C / PRS 101 / PAO1).